The following is a 77-amino-acid chain: U3-theraphotoxin-Hhn1k (77 aa).

A signal peptide spans 1–14 (TFAGLVLLFVVCYA). Residues 15 to 42 (SESEEKEFPKEMLSSIFAVDNDFKQEER) constitute a propeptide that is removed on maturation. Cystine bridges form between C44–C57 and C56–C69.

The protein belongs to the neurotoxin 10 (Hwtx-1) family. 51 (Hntx-8) subfamily. Hntx-8 sub-subfamily. As to expression, expressed by the venom gland.

The protein localises to the secreted. Its function is as follows. Ion channel inhibitor. The polypeptide is U3-theraphotoxin-Hhn1k (Cyriopagopus hainanus (Chinese bird spider)).